A 171-amino-acid polypeptide reads, in one-letter code: HTH-type transcriptional regulator AldR (171 aa).

Positions 1-14 (MSEGSSITGVQTPG) are enriched in polar residues. The disordered stretch occupies residues 1–21 (MSEGSSITGVQTPGSPKDVRA). In terms of domain architecture, HTH asnC-type spans 24 to 85 (LDDIDRRILL…DIDPAAVGLG (62 aa)). The segment at residues 43–62 (NSALAEMVGIAPSTCHGRVR) is a DNA-binding region (H-T-H motif).

As to quaternary structure, homodimer in the absence of L-alanine. Homooctamer in the presence of L-alanine. Homotetramers in the presence of L-cysteine.

With respect to regulation, in the presence of alanine, AldR changes its quaternary structure from a homodimer to an octamer with an open-ring conformation. The binding affinity of AldR for the ald control region is increased significantly by L-alanine. In vitro, L-cysteine also increases the binding affinity of AldR for the target DNA. Functionally, transcriptional regulator that might play a role under hypoxic conditions. Regulates the expression of ald, which encodes L-alanine dehydrogenase. Serves as both an activator for ald expression in the presence of L-alanine and a repressor in the absence of L-alanine. Acts by binding directly to the upstream region of the ald gene. Four AldR-binding sites (O2, O1, O4 and O3) were identified upstream of the ald gene. O2, O1 and O4 are required for the induction of ald expression by alanine, while O3 is directly involved in the repression of ald expression, by occluding the access of RNA polymerase to the ald promoter. In addition to O3, both O1 and O4 are also necessary for full repression of ald expression in the absence of alanine. The protein is HTH-type transcriptional regulator AldR of Mycolicibacterium smegmatis (strain ATCC 700084 / mc(2)155) (Mycobacterium smegmatis).